Consider the following 184-residue polypeptide: GTPase RhebL1 (184 aa).

GTP contacts are provided by residues 16-21 (SVGKTS), 32-38 (LEGYDPT), Gly63, 119-122 (NKAD), and 149-150 (SA). The short motif at 35–43 (YDPTVENTY) is the Effector region element. A Mg(2+)-binding site is contributed by Thr38. Residue Cys181 is modified to Cysteine methyl ester. Cys181 is lipidated: S-farnesyl cysteine. Positions 182-184 (YLM) are cleaved as a propeptide — removed in mature form.

Belongs to the small GTPase superfamily. Rheb family. Interacts with MTOR.

The protein localises to the endomembrane system. The protein resides in the cytoplasm. The catalysed reaction is GTP + H2O = GDP + phosphate + H(+). In terms of biological role, binds GTP and exhibits intrinsic GTPase activity. May activate NF-kappa-B-mediated gene transcription. Promotes signal transduction through MTOR, activates RPS6KB1, and is a downstream target of the small GTPase-activating proteins TSC1 and TSC2. The polypeptide is GTPase RhebL1 (Rhebl1) (Mus musculus (Mouse)).